Here is a 335-residue protein sequence, read N- to C-terminus: Glyceraldehyde-3-phosphate dehydrogenase (335 aa).

NAD(+) contacts are provided by residues 12–13 (RI), aspartate 34, arginine 78, and serine 120. Residues 151–153 (SCT) and threonine 182 contribute to the D-glyceraldehyde 3-phosphate site. Cysteine 152 acts as the Nucleophile in catalysis. Residue asparagine 183 participates in NAD(+) binding. D-glyceraldehyde 3-phosphate is bound by residues arginine 197, 210-211 (TG), and arginine 233. An NAD(+)-binding site is contributed by asparagine 315.

The protein belongs to the glyceraldehyde-3-phosphate dehydrogenase family. In terms of assembly, homotetramer.

Its subcellular location is the cytoplasm. The enzyme catalyses D-glyceraldehyde 3-phosphate + phosphate + NAD(+) = (2R)-3-phospho-glyceroyl phosphate + NADH + H(+). It functions in the pathway carbohydrate degradation; glycolysis; pyruvate from D-glyceraldehyde 3-phosphate: step 1/5. Its function is as follows. Catalyzes the oxidative phosphorylation of glyceraldehyde 3-phosphate (G3P) to 1,3-bisphosphoglycerate (BPG) using the cofactor NAD. The first reaction step involves the formation of a hemiacetal intermediate between G3P and a cysteine residue, and this hemiacetal intermediate is then oxidized to a thioester, with concomitant reduction of NAD to NADH. The reduced NADH is then exchanged with the second NAD, and the thioester is attacked by a nucleophilic inorganic phosphate to produce BPG. The sequence is that of Glyceraldehyde-3-phosphate dehydrogenase (gap) from Geobacillus stearothermophilus (Bacillus stearothermophilus).